We begin with the raw amino-acid sequence, 512 residues long: Plastidal glycolate/glycerate translocator 1, chloroplastic (512 aa).

The transit peptide at 1 to 76 directs the protein to the chloroplast; that stretch reads MATLLATPIF…MNFERKLSVQ (76 aa). Position 77 is an N-acetylalanine (Ala77). 12 helical membrane-spanning segments follow: residues 93 to 113, 127 to 147, 160 to 180, 195 to 215, 238 to 258, 270 to 290, 293 to 313, 336 to 356, 367 to 387, 398 to 418, 425 to 445, and 480 to 500; these read VIAI…DYFL, ALFG…VVPA, FLFI…VLPL, YIVA…AIAV, LELW…LFYP, PFLL…PSSI, VFHP…AFGY, AGDI…FSMF, AEIF…TALV, TVSI…VSLF, LTAA…QVVL, and LPFC…LCSV.

This sequence belongs to the CidB/LrgB family. In terms of tissue distribution, expressed in leaves, stems and flowers, but not in roots.

The protein resides in the plastid. Its subcellular location is the chloroplast membrane. Glycolate/glycerate transporter required for photorespiration. The chain is Plastidal glycolate/glycerate translocator 1, chloroplastic (PLGG1) from Arabidopsis thaliana (Mouse-ear cress).